The sequence spans 469 residues: Glutamate--tRNA ligase (469 aa).

Residues 11 to 21 (PSPTGFIHLGN) carry the 'HIGH' region motif. Residues 114–131 (QREAGEKPRYDGTWRPEP) are compositionally biased toward basic and acidic residues. A disordered region spans residues 114-139 (QREAGEKPRYDGTWRPEPGKVLPEPP). The 'KMSKS' region motif lies at 243-247 (KMSKR). Lys246 provides a ligand contact to ATP.

It belongs to the class-I aminoacyl-tRNA synthetase family. Glutamate--tRNA ligase type 1 subfamily. In terms of assembly, monomer.

It is found in the cytoplasm. The enzyme catalyses tRNA(Glu) + L-glutamate + ATP = L-glutamyl-tRNA(Glu) + AMP + diphosphate. Its function is as follows. Catalyzes the attachment of glutamate to tRNA(Glu) in a two-step reaction: glutamate is first activated by ATP to form Glu-AMP and then transferred to the acceptor end of tRNA(Glu). The polypeptide is Glutamate--tRNA ligase (Paraburkholderia phytofirmans (strain DSM 17436 / LMG 22146 / PsJN) (Burkholderia phytofirmans)).